The chain runs to 452 residues: UDP-N-acetylmuramoylalanine--D-glutamate ligase (452 aa).

ATP is bound at residue 115–121 (GTNGKTT).

This sequence belongs to the MurCDEF family.

It localises to the cytoplasm. It carries out the reaction UDP-N-acetyl-alpha-D-muramoyl-L-alanine + D-glutamate + ATP = UDP-N-acetyl-alpha-D-muramoyl-L-alanyl-D-glutamate + ADP + phosphate + H(+). It participates in cell wall biogenesis; peptidoglycan biosynthesis. Functionally, cell wall formation. Catalyzes the addition of glutamate to the nucleotide precursor UDP-N-acetylmuramoyl-L-alanine (UMA). This chain is UDP-N-acetylmuramoylalanine--D-glutamate ligase, found in Elusimicrobium minutum (strain Pei191).